The sequence spans 519 residues: ATP synthase subunit beta (519 aa).

Residues Met1–Lys26 are compositionally biased toward low complexity. The interval Met1–Ser40 is disordered. Gly197 to Thr204 lines the ATP pocket.

It belongs to the ATPase alpha/beta chains family. As to quaternary structure, F-type ATPases have 2 components, CF(1) - the catalytic core - and CF(0) - the membrane proton channel. CF(1) has five subunits: alpha(3), beta(3), gamma(1), delta(1), epsilon(1). CF(0) has three main subunits: a(1), b(2) and c(9-12). The alpha and beta chains form an alternating ring which encloses part of the gamma chain. CF(1) is attached to CF(0) by a central stalk formed by the gamma and epsilon chains, while a peripheral stalk is formed by the delta and b chains.

It is found in the cell inner membrane. It catalyses the reaction ATP + H2O + 4 H(+)(in) = ADP + phosphate + 5 H(+)(out). In terms of biological role, produces ATP from ADP in the presence of a proton gradient across the membrane. The catalytic sites are hosted primarily by the beta subunits. The protein is ATP synthase subunit beta of Chelativorans sp. (strain BNC1).